The sequence spans 489 residues: N-succinylglutamate 5-semialdehyde dehydrogenase (489 aa).

223-228 provides a ligand contact to NAD(+); sequence GSSRTG. Residues Glu-246 and Cys-280 contribute to the active site.

The protein belongs to the aldehyde dehydrogenase family. AstD subfamily.

It carries out the reaction N-succinyl-L-glutamate 5-semialdehyde + NAD(+) + H2O = N-succinyl-L-glutamate + NADH + 2 H(+). Its pathway is amino-acid degradation; L-arginine degradation via AST pathway; L-glutamate and succinate from L-arginine: step 4/5. Functionally, catalyzes the NAD-dependent reduction of succinylglutamate semialdehyde into succinylglutamate. The sequence is that of N-succinylglutamate 5-semialdehyde dehydrogenase from Aeromonas salmonicida (strain A449).